A 536-amino-acid chain; its full sequence is Proto-oncogene tyrosine-protein kinase Src (536 aa).

Residues 1–53 (MGSNKSKPKDASQRRRSLEPAENVHGAGGGAFPASQTPSKPASADGHRGPSAA) are disordered. Gly-2 carries the N-myristoyl glycine lipid modification. Over residues 7–19 (KPKDASQRRRSLE) the composition is skewed to basic and acidic residues. Ser-17 bears the Phosphoserine mark. Ser-75 is modified (phosphoserine; by CDK5). In terms of domain architecture, SH3 spans 84–145 (GGVTTFVALY…PSNYVAPSDS (62 aa)). The SH2 domain maps to 151–248 (WYFGKITRRE…GLCHRLTTVC (98 aa)). Tyr-187 is modified (phosphotyrosine). One can recognise a Protein kinase domain in the interval 270 to 523 (LRLEVKLGQG…YLQAFLEDYF (254 aa)). ATP-binding positions include 276-284 (LGQGCFGEV) and Lys-298. The active-site Proton acceptor is Asp-389. Tyr-419 is modified (phosphotyrosine; by autocatalysis). Tyr-419 bears the Phosphotyrosine; by FAK2 mark. Position 530 is a phosphotyrosine; by CSK (Tyr-530).

The protein belongs to the protein kinase superfamily. Tyr protein kinase family. SRC subfamily. Part of a complex comprised of PTPRA, BCAR1, BCAR3 (via SH2 domain) and SRC; the formation of the complex is dependent on integrin mediated-tyrosine phosphorylation of PTPRA. Interacts with DDEF1/ASAP1; via the SH3 domain. Interacts with CCPG1. Identified in a complex containing FGFR4, NCAM1, CDH2, PLCG1, FRS2, SRC, SHC1, GAP43 and CTTN. Interacts with ERBB2, STAT1 and PNN. Interacts with DDR1, DDR2 and DAB2. Interacts with CDCP1, TGFB1I1 and TOM1L2. Interacts with the cytoplasmic domain of MUC1, phosphorylates it and increases binding of MUC1 with beta-catenin. Interacts with RALGPS1; via the SH3 domain. Interacts with CAV2 (tyrosine phosphorylated form). Interacts (via the SH3 domain and the protein kinase domain) with ARRB1; the interaction is independent of the phosphorylation state of SRC C-terminus. Interacts with ARRB1 and ARRB2. Interacts with SRCIN1. Interacts with NDFIP2 and more weakly with NDFIP1. Interacts with PIK3CA and/or PIK3C2B, PTK2/FAK1 and ESR1 (dimethylated on arginine). Interacts with FASLG. Interacts (via SH2 domain) with the 'Tyr-402' phosphorylated form of PTK2B/PYK2. Interacts (via SH2 domain) with FLT3 (tyrosine phosphorylated). Interacts with PDGFRA (tyrosine phosphorylated). Interacts with CSF1R. Interacts (via SH2 and SH3 domain) with TNK2. Interacts (via protein kinase domain) with the tyrosine phosphorylated form of RUNX3 (via runt domain). Interacts with TRAF3 (via RING-type zinc finger domain). Interacts with RIGI, MAVS and TBK1. Interacts (via SH2 domain) with RACK1; the interaction is enhanced by tyrosine phosphorylation of RACK1 and inhibits SRC activity. Interacts with EPHB1; activates the MAPK/ERK cascade to regulate cell migration. Interacts with FCAMR. Interacts (via SH2 domain) with the 'Tyr-9' phosphorylated form of PDPK1. Interacts with AMOTL2; this interaction regulates the translocation of phosphorylated SRC to peripheral cell-matrix adhesion sites. Interacts with TRAP1. Interacts with CBLC; the interaction is enhanced when SRC is phosphorylated at Tyr-419. Interacts with ARHGEF5. Interacts (via cytoplasmic domain) with CEACAM1 (via SH2 domain); this interaction is regulated by trans-homophilic cell adhesion. Interacts with MPP2. Interacts with PRR7. Interacts (via kinase domain and to a lesser extent the SH2 domain) directly with PDLIM4; this interaction results in PTPN13-mediated dephosphorylation of this protein leading to its inactivation. Interacts with P85 (PIK3R1 or PIK3R2). Interacts with HNRNPA2B1. Interacts with IL6ST/gp130. Interacts (via SH3 domain) with PELP1 in the presence of 17-beta-estradiol. Interacts with AMBRA1. As to quaternary structure, (Microbial infection) Interacts with HEV ORF3 protein; via the SH3 domain. In terms of assembly, (Microbial infection) Interacts (via SH2 domain) with HCV non-structural protein 5A (via N-terminus). Myristoylated at Gly-2, and this is essential for targeting to membranes. Post-translationally, dephosphorylated at Tyr-530 by PTPRJ. Phosphorylated on Tyr-530 by c-Src kinase (CSK). The phosphorylated form is termed pp60c-src. Dephosphorylated by PTPRJ at Tyr-419. Normally maintained in an inactive conformation with the SH2 domain engaged with Tyr-530, the SH3 domain engaged with the SH2-kinase linker, and Tyr-419 dephosphorylated. Dephosphorylation of Tyr-530 as a result of protein tyrosine phosphatase (PTP) action disrupts the intramolecular interaction between the SH2 domain and Tyr-530, Tyr-419 can then become autophosphorylated, resulting in SRC activation. Phosphorylation of Tyr-530 by CSK allows this interaction to reform, resulting in SRC inactivation. CDK5-mediated phosphorylation at Ser-75 targets SRC to ubiquitin-dependent degradation and thus leads to cytoskeletal reorganization. Phosphorylated by PTK2/FAK1; this enhances kinase activity. Phosphorylated by PTK2B/PYK2; this enhances kinase activity. Upon activation of IL6ST by IL6, Tyr-419 is phosphorylated and Tyr-530 dephosphorylated. In terms of processing, displays reduced levels of autophosphorylation at Tyr-419 compared to isoforms 2 and 3. Displays enhanced levels of autophosphorylation at Tyr-419 compared to isoform 1. Post-translationally, displays enhanced levels of autophosphorylation at Tyr-419 compared to isoform 1. Shows reduced phosphorylation at Tyr-527 compared to isoforms 1 and 2. In terms of processing, S-nitrosylation is important for activation of its kinase activity. Ubiquitinated in response to CDK5-mediated phosphorylation. Ubiquitination mediated by CBLC requires SRC autophosphorylation at Tyr-419 and may lead to lysosomal degradation. Expressed ubiquitously. Expressed in the skin (at protein level). Platelets, neurons and osteoclasts express 5-fold to 200-fold higher levels than most other tissues. In terms of tissue distribution, expressed in spleen and liver. As to expression, expressed in brain.

It is found in the cell membrane. The protein resides in the mitochondrion inner membrane. The protein localises to the nucleus. Its subcellular location is the cytoplasm. It localises to the cytoskeleton. It is found in the perinuclear region. The protein resides in the cell junction. The protein localises to the focal adhesion. It carries out the reaction L-tyrosyl-[protein] + ATP = O-phospho-L-tyrosyl-[protein] + ADP + H(+). Its activity is regulated as follows. Phosphorylation by CSK at Tyr-530 inhibits kinase activity. Inhibitory phosphorylation at Tyr-530 is enhanced by heme. Further phosphorylation by CDK1 partially reactivates CSK-inactivated SRC and facilitates complete reactivation by protein tyrosine phosphatase PTPRC. Integrin engagement stimulates kinase activity. Phosphorylation by PTK2/FAK1 enhances kinase activity. Butein and pseudosubstrate-based peptide inhibitors like CIYKYYF act as inhibitors. Phosphorylation at Tyr-419 increases kinase activity. Non-receptor protein tyrosine kinase which is activated following engagement of many different classes of cellular receptors including immune response receptors, integrins and other adhesion receptors, receptor protein tyrosine kinases, G protein-coupled receptors as well as cytokine receptors. Participates in signaling pathways that control a diverse spectrum of biological activities including gene transcription, immune response, cell adhesion, cell cycle progression, apoptosis, migration, and transformation. Due to functional redundancy between members of the SRC kinase family, identification of the specific role of each SRC kinase is very difficult. SRC appears to be one of the primary kinases activated following engagement of receptors and plays a role in the activation of other protein tyrosine kinase (PTK) families. Receptor clustering or dimerization leads to recruitment of SRC to the receptor complexes where it phosphorylates the tyrosine residues within the receptor cytoplasmic domains. Plays an important role in the regulation of cytoskeletal organization through phosphorylation of specific substrates such as AFAP1. Phosphorylation of AFAP1 allows the SRC SH2 domain to bind AFAP1 and to localize to actin filaments. Cytoskeletal reorganization is also controlled through the phosphorylation of cortactin (CTTN). When cells adhere via focal adhesions to the extracellular matrix, signals are transmitted by integrins into the cell resulting in tyrosine phosphorylation of a number of focal adhesion proteins, including PTK2/FAK1 and paxillin (PXN). In addition to phosphorylating focal adhesion proteins, SRC is also active at the sites of cell-cell contact adherens junctions and phosphorylates substrates such as beta-catenin (CTNNB1), delta-catenin (CTNND1), and plakoglobin (JUP). Another type of cell-cell junction, the gap junction, is also a target for SRC, which phosphorylates connexin-43 (GJA1). SRC is implicated in regulation of pre-mRNA-processing and phosphorylates RNA-binding proteins such as KHDRBS1. Phosphorylates PKP3 at 'Tyr-195' in response to reactive oxygen species, which may cause the release of PKP3 from desmosome cell junctions into the cytoplasm. Also plays a role in PDGF-mediated tyrosine phosphorylation of both STAT1 and STAT3, leading to increased DNA binding activity of these transcription factors. Involved in the RAS pathway through phosphorylation of RASA1 and RASGRF1. Plays a role in EGF-mediated calcium-activated chloride channel activation. Required for epidermal growth factor receptor (EGFR) internalization through phosphorylation of clathrin heavy chain (CLTC and CLTCL1) at 'Tyr-1477'. Involved in beta-arrestin (ARRB1 and ARRB2) desensitization through phosphorylation and activation of GRK2, leading to beta-arrestin phosphorylation and internalization. Has a critical role in the stimulation of the CDK20/MAPK3 mitogen-activated protein kinase cascade by epidermal growth factor. Might be involved not only in mediating the transduction of mitogenic signals at the level of the plasma membrane but also in controlling progression through the cell cycle via interaction with regulatory proteins in the nucleus. Plays an important role in osteoclastic bone resorption in conjunction with PTK2B/PYK2. Both the formation of a SRC-PTK2B/PYK2 complex and SRC kinase activity are necessary for this function. Recruited to activated integrins by PTK2B/PYK2, thereby phosphorylating CBL, which in turn induces the activation and recruitment of phosphatidylinositol 3-kinase to the cell membrane in a signaling pathway that is critical for osteoclast function. Promotes energy production in osteoclasts by activating mitochondrial cytochrome C oxidase. Phosphorylates DDR2 on tyrosine residues, thereby promoting its subsequent autophosphorylation. Phosphorylates RUNX3 and COX2 on tyrosine residues, TNK2 on 'Tyr-284' and CBL on 'Tyr-731'. Enhances RIGI-elicited antiviral signaling. Phosphorylates PDPK1 at 'Tyr-9', 'Tyr-373' and 'Tyr-376'. Phosphorylates BCAR1 at 'Tyr-128'. Phosphorylates CBLC at multiple tyrosine residues, phosphorylation at 'Tyr-341' activates CBLC E3 activity. Phosphorylates synaptic vesicle protein synaptophysin (SYP). Involved in anchorage-independent cell growth. Required for podosome formation. Mediates IL6 signaling by activating YAP1-NOTCH pathway to induce inflammation-induced epithelial regeneration. Phosphorylates OTUB1, promoting deubiquitination of RPTOR. Phosphorylates caspase CASP8 at 'Tyr-380' which negatively regulates CASP8 processing and activation, down-regulating CASP8 proapoptotic function. Its function is as follows. Non-receptor protein tyrosine kinase which phosphorylates synaptophysin with high affinity. Functionally, non-receptor protein tyrosine kinase which shows higher basal kinase activity than isoform 1, possibly due to weakened intramolecular interactions which enhance autophosphorylation of Tyr-419 and subsequent activation. The SH3 domain shows reduced affinity with the linker sequence between the SH2 and kinase domains which may account for the increased basal activity. Displays altered substrate specificity compared to isoform 1, showing weak affinity for synaptophysin and for peptide substrates containing class I or class II SH3 domain-binding motifs. Plays a role in L1CAM-mediated neurite elongation, possibly by acting downstream of L1CAM to drive cytoskeletal rearrangements involved in neurite outgrowth. In terms of biological role, non-receptor protein tyrosine kinase which shows higher basal kinase activity than isoform 1, possibly due to weakened intramolecular interactions which enhance autophosphorylation of Tyr-419 and subsequent activation. The SH3 domain shows reduced affinity with the linker sequence between the SH2 and kinase domains which may account for the increased basal activity. Displays altered substrate specificity compared to isoform 1, showing weak affinity for synaptophysin and for peptide substrates containing class I or class II SH3 domain-binding motifs. Plays a role in neurite elongation. In Homo sapiens (Human), this protein is Proto-oncogene tyrosine-protein kinase Src.